Here is a 104-residue protein sequence, read N- to C-terminus: Pole-localizer protein TmaR (104 aa).

2 coiled-coil regions span residues 13 to 43 (RKNKLKRELLDNEKKVRDNRKRVELLENLLD) and 76 to 96 (SAEISKARRDISRRIRELTEE).

Belongs to the pole-localizer TmaR family.

It localises to the cytoplasm. Its function is as follows. Pole-localizer protein involved in the regulation of several cellular processes. In Vibrio vulnificus (strain CMCP6), this protein is Pole-localizer protein TmaR.